Reading from the N-terminus, the 372-residue chain is Cytochrome b (372 aa).

Transmembrane regions (helical) follow at residues 25–45, 69–90, 105–125, and 170–190; these read FGSMLLTCLILQIMTGFFLAI, WIMQNLHAIGASLFFICIYIHI, WLSGTTLLIILMATAFFGYVL, and FFALHFILPFTIISLSSIHII. The heme b site is built by His-75 and His-89. Residues His-174 and His-188 each contribute to the heme b site. A ubiquinone is bound at residue His-193. The next 4 membrane-spanning stretches (helical) occupy residues 218-238, 280-300, 312-332, and 339-358; these read YKDMLMIIIMTAILFLILSFS, LGGTLALVMSVMILTTAPFTH, LSQIVFWTLIATFITITWTAT, and FISISQTASIFYFSFFIMNP.

Belongs to the cytochrome b family. As to quaternary structure, the cytochrome bc1 complex contains 3 respiratory subunits (MT-CYB, CYC1 and UQCRFS1), 2 core proteins (UQCRC1 and UQCRC2) and probably 6 low-molecular weight proteins. It depends on heme b as a cofactor.

The protein localises to the mitochondrion inner membrane. Functionally, component of the ubiquinol-cytochrome c reductase complex (complex III or cytochrome b-c1 complex) that is part of the mitochondrial respiratory chain. The b-c1 complex mediates electron transfer from ubiquinol to cytochrome c. Contributes to the generation of a proton gradient across the mitochondrial membrane that is then used for ATP synthesis. This Walterinnesia aegyptia (Desert black snake) protein is Cytochrome b (MT-CYB).